The sequence spans 202 residues: Peptidyl-tRNA hydrolase (202 aa).

Tyrosine 16 provides a ligand contact to tRNA. Histidine 21 serves as the catalytic Proton acceptor. Residues tyrosine 68, asparagine 70, and asparagine 116 each contribute to the tRNA site.

Belongs to the PTH family. In terms of assembly, monomer.

It is found in the cytoplasm. The catalysed reaction is an N-acyl-L-alpha-aminoacyl-tRNA + H2O = an N-acyl-L-amino acid + a tRNA + H(+). Its function is as follows. Hydrolyzes ribosome-free peptidyl-tRNAs (with 1 or more amino acids incorporated), which drop off the ribosome during protein synthesis, or as a result of ribosome stalling. Functionally, catalyzes the release of premature peptidyl moieties from peptidyl-tRNA molecules trapped in stalled 50S ribosomal subunits, and thus maintains levels of free tRNAs and 50S ribosomes. The chain is Peptidyl-tRNA hydrolase from Treponema pallidum (strain Nichols).